The chain runs to 238 residues: 2-C-methyl-D-erythritol 4-phosphate cytidylyltransferase (238 aa).

It belongs to the IspD/TarI cytidylyltransferase family. IspD subfamily.

The catalysed reaction is 2-C-methyl-D-erythritol 4-phosphate + CTP + H(+) = 4-CDP-2-C-methyl-D-erythritol + diphosphate. The protein operates within isoprenoid biosynthesis; isopentenyl diphosphate biosynthesis via DXP pathway; isopentenyl diphosphate from 1-deoxy-D-xylulose 5-phosphate: step 2/6. In terms of biological role, catalyzes the formation of 4-diphosphocytidyl-2-C-methyl-D-erythritol from CTP and 2-C-methyl-D-erythritol 4-phosphate (MEP). This Acinetobacter baumannii (strain SDF) protein is 2-C-methyl-D-erythritol 4-phosphate cytidylyltransferase.